The sequence spans 166 residues: Ubiquitin-fold modifier-conjugating enzyme 1 (166 aa).

The active-site Glycyl thioester intermediate is Cys116.

The protein belongs to the ubiquitin-conjugating enzyme family. UFC1 subfamily.

E2-like enzyme which forms an intermediate with UFM1 via a thioester linkage. The polypeptide is Ubiquitin-fold modifier-conjugating enzyme 1 (Monosiga brevicollis (Choanoflagellate)).